The primary structure comprises 188 residues: Peptide methionine sulfoxide reductase MsrA (188 aa).

The tract at residues 1 to 25 (MEGNEKAEQKNATSEESTDIFENPG) is disordered. Residue C37 is part of the active site.

This sequence belongs to the MsrA Met sulfoxide reductase family.

It catalyses the reaction L-methionyl-[protein] + [thioredoxin]-disulfide + H2O = L-methionyl-(S)-S-oxide-[protein] + [thioredoxin]-dithiol. It carries out the reaction [thioredoxin]-disulfide + L-methionine + H2O = L-methionine (S)-S-oxide + [thioredoxin]-dithiol. Its function is as follows. Has an important function as a repair enzyme for proteins that have been inactivated by oxidation. Catalyzes the reversible oxidation-reduction of methionine sulfoxide in proteins to methionine. The chain is Peptide methionine sulfoxide reductase MsrA from Methanosarcina acetivorans (strain ATCC 35395 / DSM 2834 / JCM 12185 / C2A).